A 255-amino-acid polypeptide reads, in one-letter code: MSKAFLPTILEQKEKEVAQLVMEDLQPLRQTYRLYDFLKSNQNKLQIISEVKKASPSMGDINLDVDIVAQAKTYEENGAAMISVLTDEVFFKGDISYLKEISTQVAIPTLAKDFIIDEKQIVRSRNAGATVILLIVAALPEARLKELYDFATSLGLEVLVETHNLPELEVAHRIGAEIIGVNNRNLVTFETDINTSLELSTHFKDKPVYISESAIFTGQDAALVAPYFNGILVGTALMTADNVAKKVKELQIDKG.

This sequence belongs to the TrpC family.

The enzyme catalyses 1-(2-carboxyphenylamino)-1-deoxy-D-ribulose 5-phosphate + H(+) = (1S,2R)-1-C-(indol-3-yl)glycerol 3-phosphate + CO2 + H2O. It participates in amino-acid biosynthesis; L-tryptophan biosynthesis; L-tryptophan from chorismate: step 4/5. The sequence is that of Indole-3-glycerol phosphate synthase from Streptococcus thermophilus (strain ATCC BAA-491 / LMD-9).